We begin with the raw amino-acid sequence, 569 residues long: Proline--tRNA ligase (569 aa).

Belongs to the class-II aminoacyl-tRNA synthetase family. ProS type 1 subfamily. In terms of assembly, homodimer.

The protein localises to the cytoplasm. It catalyses the reaction tRNA(Pro) + L-proline + ATP = L-prolyl-tRNA(Pro) + AMP + diphosphate. Catalyzes the attachment of proline to tRNA(Pro) in a two-step reaction: proline is first activated by ATP to form Pro-AMP and then transferred to the acceptor end of tRNA(Pro). As ProRS can inadvertently accommodate and process non-cognate amino acids such as alanine and cysteine, to avoid such errors it has two additional distinct editing activities against alanine. One activity is designated as 'pretransfer' editing and involves the tRNA(Pro)-independent hydrolysis of activated Ala-AMP. The other activity is designated 'posttransfer' editing and involves deacylation of mischarged Ala-tRNA(Pro). The misacylated Cys-tRNA(Pro) is not edited by ProRS. The polypeptide is Proline--tRNA ligase (Colwellia psychrerythraea (strain 34H / ATCC BAA-681) (Vibrio psychroerythus)).